The primary structure comprises 164 residues: CDP-archaeol synthase (164 aa).

A run of 4 helical transmembrane segments spans residues 3-23 (LFVF…AVLA), 53-73 (GLAI…LLHP), 77-97 (LLDA…GAFI), and 126-146 (SLYA…TPII).

It belongs to the CDP-archaeol synthase family. Mg(2+) is required as a cofactor.

It localises to the cell membrane. The catalysed reaction is 2,3-bis-O-(geranylgeranyl)-sn-glycerol 1-phosphate + CTP + H(+) = CDP-2,3-bis-O-(geranylgeranyl)-sn-glycerol + diphosphate. Its pathway is membrane lipid metabolism; glycerophospholipid metabolism. Its function is as follows. Catalyzes the formation of CDP-2,3-bis-(O-geranylgeranyl)-sn-glycerol (CDP-archaeol) from 2,3-bis-(O-geranylgeranyl)-sn-glycerol 1-phosphate (DGGGP) and CTP. This reaction is the third ether-bond-formation step in the biosynthesis of archaeal membrane lipids. This Pyrobaculum arsenaticum (strain DSM 13514 / JCM 11321 / PZ6) protein is CDP-archaeol synthase.